We begin with the raw amino-acid sequence, 430 residues long: Trigger factor (430 aa).

The 86-residue stretch at 163-248 (GNIAIIDFKG…IKDIKVKELP (86 aa)) folds into the PPIase FKBP-type domain.

Belongs to the FKBP-type PPIase family. Tig subfamily.

It localises to the cytoplasm. The catalysed reaction is [protein]-peptidylproline (omega=180) = [protein]-peptidylproline (omega=0). In terms of biological role, involved in protein export. Acts as a chaperone by maintaining the newly synthesized protein in an open conformation. Functions as a peptidyl-prolyl cis-trans isomerase. This chain is Trigger factor, found in Clostridium botulinum (strain Langeland / NCTC 10281 / Type F).